The sequence spans 251 residues: Hydroxyacylglutathione hydrolase (251 aa).

The Zn(2+) site is built by His-53, His-55, Asp-57, His-58, His-110, Asp-127, and His-165.

Belongs to the metallo-beta-lactamase superfamily. Glyoxalase II family. As to quaternary structure, monomer. It depends on Zn(2+) as a cofactor.

It carries out the reaction an S-(2-hydroxyacyl)glutathione + H2O = a 2-hydroxy carboxylate + glutathione + H(+). It functions in the pathway secondary metabolite metabolism; methylglyoxal degradation; (R)-lactate from methylglyoxal: step 2/2. Its function is as follows. Thiolesterase that catalyzes the hydrolysis of S-D-lactoyl-glutathione to form glutathione and D-lactic acid. This is Hydroxyacylglutathione hydrolase from Salmonella arizonae (strain ATCC BAA-731 / CDC346-86 / RSK2980).